The following is a 235-amino-acid chain: Bypass of stop codon protein 2 (235 aa).

A helical transmembrane segment spans residues 68 to 88 (FGIFQLMCSLGVIVLLLPIII). Phosphoserine is present on S177.

It localises to the lipid droplet. The protein localises to the membrane. This chain is Bypass of stop codon protein 2 (BSC2), found in Saccharomyces cerevisiae (strain ATCC 204508 / S288c) (Baker's yeast).